Consider the following 5085-residue polypeptide: Protein piccolo (5085 aa).

Residues 1–20 show a composition bias toward low complexity; it reads MGNEASLEGEGLPEGLAAAA. 2 disordered regions span residues 1–142 and 173–516; these read MGNE…DFKE and DLIS…TPAQ. Over residues 92–101 the composition is skewed to pro residues; sequence PGKPPDPGRP. Basic and acidic residues-rich tracts occupy residues 110-121, 132-142, and 184-198; these read RTTDTFRSEQKL, KESKSRTDFKE, and ETTK…EQGK. Phosphoserine is present on residues Ser-211 and Ser-231. A compositionally biased stretch (polar residues) spans 227-240; that stretch reads QQDSSPKSVSSQQA. Residues 253–268 show a composition bias toward low complexity; that stretch reads PSQQSPAQTPAQQASP. Polar residues-rich tracts occupy residues 275-285, 318-332, and 375-391; these read QPGSAKATVQQ, KTSS…SLAQ, and TPAQ…QQPG. Residues 372–491 are 12 X 10 AA tandem approximate repeats of P-A-K-P-Q-P-Q-Q-P-X; the sequence is PTKTPAQQSG…LAKPSAQQPT (120 aa). The span at 392-408 shows a compositional bias: pro residues; that stretch reads PTKPSPQQPIPAKPQPQ. Residues 409–423 are compositionally biased toward low complexity; it reads QPVATKTQPQQSAPA. Positions 424-472 are enriched in pro residues; that stretch reads KPQPQQPAPAKPQPQQPTPAKPQPQPPTPAKPQPQPPTATKPQPQPPTA. Polar residues predominate over residues 486–499; sequence SAQQPTKSISQTVT. The segment at 523–547 adopts a C4-type zinc-finger fold; it reads CPLCNTTELLLHIPEKANFNTCTEC. Disordered regions lie at residues 586-880, 896-1012, 1069-1357, 1373-1604, and 1622-1815; these read AAIP…TVTG, LIST…ACPL, QLGD…PSDL, STLV…EELV, and TIAD…SDPE. The span at 596 to 613 shows a compositional bias: low complexity; the sequence is PKAATAPTATASKSPVPS. Basic and acidic residues predominate over residues 618–654; it reads PKKEPPSKQDSPKALESKKPPEPKKPPEPKKPPEPKK. The segment covering 672–682 has biased composition (low complexity); the sequence is APQLPVAEALP. A compositionally biased stretch (pro residues) spans 683-693; the sequence is EPAPPKEPSGP. A compositionally biased stretch (basic and acidic residues) spans 705-717; it reads VEPKQPKMTETRA. Residues 718 to 767 are compositionally biased toward polar residues; sequence DIQSSSTTKPDILSSQVQSQAQVKTASPLKTDSAKPSQSFPPTGEKTTPL. A compositionally biased stretch (basic and acidic residues) spans 790 to 808; the sequence is ESKDPKHIDPIQKKDEPKK. 2 positions are modified to phosphoserine: Ser-857 and Ser-869. Polar residues-rich tracts occupy residues 867-878, 896-906, and 917-936; these read PKSQPTTPQETV, LISTAGQQGPH, and QAPT…STGQ. Thr-873 carries the phosphothreonine modification. Residues 990 to 1004 show a composition bias toward basic and acidic residues; it reads EPEKAVPAHKPDKTT. Residues 1010–1033 form a C4-type zinc finger; the sequence is CPLCRTELNLGSQEPPNFNTCTEC. Positions 1077–1092 are enriched in pro residues; that stretch reads PPAPSGPKASPMPAPA. Residues 1110-1129 show a composition bias toward basic and acidic residues; that stretch reads KEAEGKTEAEKPVPEKETAS. Thr-1133 is modified (phosphothreonine). 3 stretches are compositionally biased toward basic and acidic residues: residues 1141-1150, 1157-1199, and 1274-1295; these read QKLEESEGKK, PEKK…KLPP, and SSKD…DKSD. Residues 1300–1318 show a composition bias toward polar residues; sequence QQPKSPQGLSDTGYSSDGI. Phosphoserine occurs at positions 1304, 1314, 1315, 1344, 1346, 1349, 1350, and 1353. The span at 1331 to 1345 shows a compositional bias: basic and acidic residues; the sequence is SDEKDLLKGLKKDSF. Positions 1346–1355 are enriched in low complexity; sequence SQESSPSSPS. A compositionally biased stretch (basic and acidic residues) spans 1378–1396; sequence EKAEKKTQPQKISPEKPQD. The span at 1397-1407 shows a compositional bias: polar residues; sequence QQKTQTASETL. Residues 1417 to 1456 are compositionally biased toward basic and acidic residues; it reads KESQEKKVSPKKDSEQGFPSRKEHKEKPELVDDLSPRRAS. A phosphoserine mark is found at Ser-1451, Ser-1463, Ser-1464, Ser-1466, Ser-1469, Ser-1493, Ser-1496, Ser-1517, and Ser-1519. The span at 1511 to 1523 shows a compositional bias: acidic residues; it reads SADEDASGSEDEE. Position 1564 is a phosphothreonine (Thr-1564). Phosphoserine occurs at positions 1565, 1575, and 1587. Positions 1578–1587 are enriched in acidic residues; the sequence is DEDDETFDES. Over residues 1588–1599 the composition is skewed to basic and acidic residues; the sequence is PELKFRETKSQE. Residues 1622–1635 are compositionally biased toward polar residues; it reads TIADKYSSESSQKK. Residues 1640 to 1650 show a composition bias toward acidic residues; the sequence is FDEEPELEMES. A Phosphoserine modification is found at Ser-1650. Phosphothreonine is present on Thr-1652. Phosphoserine is present on residues Ser-1654 and Ser-1659. Positions 1662-1679 are enriched in polar residues; the sequence is EGSSSLHASSFTPGTSPT. Over residues 1719–1732 the composition is skewed to acidic residues; sequence DSSEEEELREEEEL. Phosphoserine is present on residues Ser-1720 and Ser-1721. A compositionally biased stretch (basic and acidic residues) spans 1733–1746; the sequence is LKEQEKQRELEQQQ. Thr-1772 is subject to Phosphothreonine. Position 1778 is a phosphoserine (Ser-1778). Basic and acidic residues predominate over residues 1787-1802; sequence EELRQAAEMEELHRSS. Phosphoserine is present on residues Ser-1807, Ser-1812, Ser-1820, and Ser-1841. Disordered stretches follow at residues 2116-2139, 2275-2385, and 2456-2486; these read PSES…SSVC, ELTK…PTYP, and KPPI…TGLS. The span at 2121 to 2139 shows a compositional bias: low complexity; sequence TSVPPSDTPSLTSSISSVC. Over residues 2350-2384 the composition is skewed to pro residues; it reads QPPPPPPPPPPSPSTSSPPPTPPLPPATSPKPPTY. A Phosphoserine modification is found at Ser-2511. The O-linked (GlcNAc) threonine glycan is linked to Thr-2702. Ser-2976 carries O-linked (GlcNAc) serine glycosylation. Thr-3014 is modified (phosphothreonine). Disordered stretches follow at residues 3350-3457 and 3503-3572; these read KEEK…PLSK and KTYK…LYSP. Residue Ser-3374 is modified to Phosphoserine. The span at 3377 to 3386 shows a compositional bias: basic and acidic residues; that stretch reads DDPRNLKKIV. Ser-3388 carries the post-translational modification Phosphoserine. 2 positions are modified to phosphothreonine: Thr-3392 and Thr-3419. Acidic residues predominate over residues 3419-3428; it reads TDDEDQDEWD. Polar residues predominate over residues 3511 to 3523; the sequence is GCQTETDSDTQSP. Phosphoserine is present on residues Ser-3522, Ser-3530, Ser-3561, Ser-3565, Ser-3571, Ser-3574, Ser-3577, Ser-3598, Ser-3624, Ser-3626, and Ser-3632. Disordered stretches follow at residues 3602–3695 and 3774–3816; these read VLHP…ASRR and AEDR…FIPP. Polar residues-rich tracts occupy residues 3647-3663 and 3679-3691; these read EGFT…SGTQ and STGT…TMGT. Ser-3781 carries the post-translational modification Phosphoserine. The segment covering 3791–3803 has biased composition (basic and acidic residues); that stretch reads SRVESQHGVERPR. The span at 3805-3816 shows a compositional bias: polar residues; the sequence is APQTEFSQFIPP. Phosphoserine occurs at positions 4034 and 4150. 2 disordered regions span residues 4225-4248 and 4272-4291; these read ADKP…YGLD and VSFG…LPIS. The segment covering 4228 to 4248 has biased composition (low complexity); the sequence is PYSSGSRSRPSSRPSSVYGLD. Residues 4275–4291 show a composition bias toward polar residues; the sequence is GHSSSSARTKPTSLPIS. Phosphoserine is present on residues Ser-4304, Ser-4308, Ser-4311, Ser-4340, and Ser-4376. Positions 4335–4357 are disordered; the sequence is RDQFGSSHSLPEVQQHMREESRT. Residues 4442 to 4536 form the PDZ domain; it reads RVKITRDFKD…EAEICVRLDL (95 aa). A disordered region spans residues 4589 to 4638; the sequence is VEKGSHAHSGPTSAGSSSVPSPGQPGSPSVSKKKHSSTKPTDGPKAASHP. Residues 4595 to 4618 are compositionally biased toward low complexity; it reads AHSGPTSAGSSSVPSPGQPGSPSV. Position 4609 is a phosphoserine (Ser-4609). The region spanning 4639–4768 is the C2 1 domain; it reads ITGEIQLQIN…SHLDNTPRWY (130 aa). Residues Asp-4668 and Asp-4674 each contribute to the Ca(2+) site. Residue Ser-4723 is modified to Phosphoserine. Residues Asp-4738, Asp-4740, Ser-4743, and Asp-4746 each coordinate Ca(2+). 2 disordered regions span residues 4775-4851 and 4874-4908; these read ESID…SVAQ and QPTK…SEGS. Low complexity-rich tracts occupy residues 4783 to 4795 and 4822 to 4832; these read HSSQ…PKPS and SSPGSSKSSSE. Residues 4840–4851 show a composition bias toward polar residues; that stretch reads PSRSQSKTSVAQ. The segment covering 4886–4908 has biased composition (low complexity); sequence SSVSTGSSGSSVGSGYSVDSEGS. Residues 4950 to 5075 form the C2 2 domain; it reads VMGEIKLALK…DLRKRIVNWH (126 aa).

In terms of assembly, interacts with BSN, ERC2/CAST1, RIMS1 and UNC13A. Interacts (via C-terminus) with TRIO (via N-terminus). Interacts with CTBP1. Interacts with SIAH1; this interaction negatively regulates SIAH1 E3 ligase activity. Directly interacts with GIT1 and GIT2. Ca(2+) serves as cofactor. In terms of tissue distribution, expressed in brain (at protein level).

It localises to the presynaptic active zone. Scaffold protein of the presynaptic cytomatrix at the active zone (CAZ) which is the place in the synapse where neurotransmitter is released. After synthesis, participates in the formation of Golgi-derived membranous organelles termed Piccolo-Bassoon transport vesicles (PTVs) that are transported along axons to sites of nascent synaptic contacts. At the presynaptic active zone, regulates the spatial organization of synaptic vesicle cluster, the protein complexes that execute membrane fusion and compensatory endocytosis. Organizes as well the readily releasable pool of synaptic vesicles and safeguards a fraction of them to be not immediately available for action potential-induced release. Also functions in processes other than assembly such as the regulation of specific presynaptic protein ubiquitination by interacting with SIAH1 or the regulation of presynaptic autophagy. Also mediates synapse to nucleus communication leading to reconfiguration of gene expression by associating with the transcriptional corepressor CTBP1 and by subsequently reducing the size of its pool available for nuclear import. The protein is Protein piccolo (Pclo) of Rattus norvegicus (Rat).